Here is a 244-residue protein sequence, read N- to C-terminus: 5-oxoprolinase subunit A (244 aa).

Belongs to the LamB/PxpA family. In terms of assembly, forms a complex composed of PxpA, PxpB and PxpC.

The enzyme catalyses 5-oxo-L-proline + ATP + 2 H2O = L-glutamate + ADP + phosphate + H(+). Functionally, catalyzes the cleavage of 5-oxoproline to form L-glutamate coupled to the hydrolysis of ATP to ADP and inorganic phosphate. This Salmonella typhimurium (strain LT2 / SGSC1412 / ATCC 700720) protein is 5-oxoprolinase subunit A.